We begin with the raw amino-acid sequence, 483 residues long: UDP-N-acetylmuramoyl-L-alanyl-D-glutamate--L-lysine ligase (483 aa).

Serine 44 contacts UDP-N-acetyl-alpha-D-muramoyl-L-alanyl-D-glutamate. 120-126 contacts ATP; the sequence is GTKGKTT. UDP-N-acetyl-alpha-D-muramoyl-L-alanyl-D-glutamate is bound by residues 162–163, serine 189, and arginine 197; that span reads TT. N6-carboxylysine is present on lysine 231. Residues 406–409 carry the L-lysine recognition motif motif; the sequence is DDPN.

It belongs to the MurCDEF family. MurE subfamily. In terms of processing, carboxylation is probably crucial for Mg(2+) binding and, consequently, for the gamma-phosphate positioning of ATP.

It is found in the cytoplasm. The catalysed reaction is UDP-N-acetyl-alpha-D-muramoyl-L-alanyl-D-glutamate + L-lysine + ATP = UDP-N-acetyl-alpha-D-muramoyl-L-alanyl-gamma-D-glutamyl-L-lysine + ADP + phosphate + H(+). It participates in cell wall biogenesis; peptidoglycan biosynthesis. Catalyzes the addition of L-lysine to the nucleotide precursor UDP-N-acetylmuramoyl-L-alanyl-D-glutamate (UMAG) in the biosynthesis of bacterial cell-wall peptidoglycan. The protein is UDP-N-acetylmuramoyl-L-alanyl-D-glutamate--L-lysine ligase of Streptococcus mutans serotype c (strain ATCC 700610 / UA159).